Here is a 301-residue protein sequence, read N- to C-terminus: UDP-N-acetylenolpyruvoylglucosamine reductase 1 (301 aa).

Residues Lys29–Gly196 form the FAD-binding PCMH-type domain. Residue Arg174 is part of the active site. Ser225 acts as the Proton donor in catalysis. The active site involves Glu295.

It belongs to the MurB family. Requires FAD as cofactor.

It is found in the cytoplasm. The catalysed reaction is UDP-N-acetyl-alpha-D-muramate + NADP(+) = UDP-N-acetyl-3-O-(1-carboxyvinyl)-alpha-D-glucosamine + NADPH + H(+). It functions in the pathway cell wall biogenesis; peptidoglycan biosynthesis. Functionally, cell wall formation. The polypeptide is UDP-N-acetylenolpyruvoylglucosamine reductase 1 (murB1) (Bacillus anthracis).